A 161-amino-acid chain; its full sequence is Nucleotide-binding protein Bcep18194_A5887 (161 aa).

This sequence belongs to the YajQ family.

In terms of biological role, nucleotide-binding protein. The chain is Nucleotide-binding protein Bcep18194_A5887 from Burkholderia lata (strain ATCC 17760 / DSM 23089 / LMG 22485 / NCIMB 9086 / R18194 / 383).